We begin with the raw amino-acid sequence, 393 residues long: MDLRSSAETDPDLSENHPGSVPAELQSRKQEQEKLSGVVKSVHRKLRRKYIEVGDFDKIWREHCEDEQTLSEYAMAMKNLADNHWANKCEGEGRIEWCRSVCQEYFQDGGMRRVLEKDEKSARHATAGNANTDTNAPPQLSSISTSSTFQLGKIRLLDVGSCFNPFLKFDEFLTVGIDIVPAVESVYKCDFLNLQLQQPLQLASDALDAFLRQLRGPIDALPAELFHVVVFSLLLSYFPSPYQRWLCCKKAHELLTLNGLLLIITPDSSHQGRHALMMRSWRVAVESLGFKRYKYVKFSHMHLIAFRKVSPTTSSDLVSRNYPEMLYIPQDFNTFDEDGFADCYEPPRSDFEDDQMACSFAELPETPYDSDSGESQSSSAPFYELEDPILLQS.

A disordered region spans residues 1–35; sequence MDLRSSAETDPDLSENHPGSVPAELQSRKQEQEKL. Residue arginine 94 participates in S-adenosyl-L-methionine binding. A disordered region spans residues 118–141; that stretch reads DEKSARHATAGNANTDTNAPPQLS. Residues 125–136 show a composition bias toward low complexity; sequence ATAGNANTDTNA. Residues glycine 160, aspartate 178, aspartate 190, phenylalanine 191, and serine 232 each coordinate S-adenosyl-L-methionine. The disordered stretch occupies residues 362 to 393; it reads ELPETPYDSDSGESQSSSAPFYELEDPILLQS.

It belongs to the BMT2/SAMTOR family. In terms of assembly, interacts with the GATOR1 complex; interaction is disrupted when samtor binds S-adenosyl-L-methionine. Interacts with the KICSTOR complex; interaction is disrupted when bmt2/samtor binds S-adenosyl-L-methionine.

Its function is as follows. S-adenosyl-L-methionine-binding protein that acts as an inhibitor of mTORC1 signaling via interaction with the GATOR1 and KICSTOR complexes. Acts as a sensor of S-adenosyl-L-methionine to signal methionine sufficiency to mTORC1: in presence of methionine, binds S-adenosyl-L-methionine, leading to disrupt interaction with the GATOR1 and KICSTOR complexes and promote mTORC1 signaling. Upon methionine starvation, S-adenosyl-L-methionine levels are reduced, thereby promoting the association with GATOR1 and KICSTOR, leading to inhibit mTORC1 signaling. Probably also acts as a S-adenosyl-L-methionine-dependent methyltransferase. The polypeptide is S-adenosylmethionine sensor upstream of mTORC1 (Danio rerio (Zebrafish)).